The sequence spans 308 residues: Elongation factor Ts (308 aa).

The tract at residues 80–83 (TDFV) is involved in Mg(2+) ion dislocation from EF-Tu.

The protein belongs to the EF-Ts family.

It is found in the cytoplasm. In terms of biological role, associates with the EF-Tu.GDP complex and induces the exchange of GDP to GTP. It remains bound to the aminoacyl-tRNA.EF-Tu.GTP complex up to the GTP hydrolysis stage on the ribosome. The chain is Elongation factor Ts from Verminephrobacter eiseniae (strain EF01-2).